We begin with the raw amino-acid sequence, 351 residues long: Fructose-1,6-bisphosphatase class 1 (351 aa).

E94, D113, L115, and D116 together coordinate Mg(2+). Substrate-binding positions include 116–119 and N207; that span reads DGSS. Residue E279 participates in Mg(2+) binding.

This sequence belongs to the FBPase class 1 family. As to quaternary structure, homotetramer. The cofactor is Mg(2+).

Its subcellular location is the cytoplasm. The catalysed reaction is beta-D-fructose 1,6-bisphosphate + H2O = beta-D-fructose 6-phosphate + phosphate. Its pathway is carbohydrate biosynthesis; gluconeogenesis. In Methylobacterium radiotolerans (strain ATCC 27329 / DSM 1819 / JCM 2831 / NBRC 15690 / NCIMB 10815 / 0-1), this protein is Fructose-1,6-bisphosphatase class 1.